We begin with the raw amino-acid sequence, 1988 residues long: Sodium channel protein type 9 subunit alpha (1988 aa).

The Cytoplasmic segment spans residues 1-125 (MAMLPPPGPQ…RRISIKILVH (125 aa)). Residues 26 to 39 (RIAERKSKEPKEEK) show a composition bias toward basic and acidic residues. A disordered region spans residues 26-55 (RIAERKSKEPKEEKKDDDEEAPKPSSDLEA). An I repeat occupies 112–410 (FSPLRRISIK…VAMAYEEQNQ (299 aa)). Residues 126 to 145 (SLFSMLIMCTILTNCIFMTM) traverse the membrane as a helical segment. At 146-150 (NNPPD) the chain is on the extracellular side. Residues 151–172 (WTKNVEYTFTGIYTFESLVKIL) traverse the membrane as a helical segment. Over 173 to 185 (ARGFCVGEFTFLR) the chain is Cytoplasmic. Residues 186–204 (DPWNWLDFVVIVFAYLTEF) form a helical membrane-spanning segment. Residues 205–210 (VNLGNV) lie on the Extracellular side of the membrane. Asn-209 carries N-linked (GlcNAc...) asparagine glycosylation. A helical transmembrane segment spans residues 211-227 (SALRTFRVLRALKTISV). Topologically, residues 228 to 241 (IPGLKTIVGALIQS) are cytoplasmic. Residues 242-267 (VKKLSDVMILTVFCLSVFALIGLQLF) traverse the membrane as a helical segment. Residues 268 to 346 (MGNLKHKCFR…PDYGYTSFDT (79 aa)) lie on the Extracellular side of the membrane. Cys-275 and Cys-324 are oxidised to a cystine. N-linked (GlcNAc...) asparagine glycosylation is present at Asn-283. Positions 347-363 (FSWAFLALFRLMTQDYW) form an intramembrane region, pore-forming. Over 364-376 (ENLYQQTLRAAGK) the chain is Extracellular. Residues 377–402 (TYMIFFVVVIFLGSFYLINLILAVVA) form a helical membrane-spanning segment. The Cytoplasmic segment spans residues 403-745 (MAYEEQNQAN…CIYFIVMDPF (343 aa)). Low complexity predominate over residues 461-471 (SSSETSKLSSK). Disordered regions lie at residues 461–543 (SSSE…RGSL) and 565–611 (GSET…SPPM). The segment covering 474-486 (KERRNRRKKKNQK) has biased composition (basic residues). Composition is skewed to basic and acidic residues over residues 489-510 (SSGEEKGDAEKLSKSESEDSIR) and 573-585 (DEHSIFGDNESRR). Residues 726 to 989 (CSPYWIKFKK…EEDPDANNLQ (264 aa)) form an II repeat. The chain crosses the membrane as a helical span at residues 746 to 762 (VDLAITICIVLNTLFMA). The Extracellular portion of the chain corresponds to 763–771 (MEHHPMTEE). The chain crosses the membrane as a helical span at residues 772-796 (FKNVLAIGNLVFTGIFAAEMVLKLI). Over 797–805 (AMDPYEYFQ) the chain is Cytoplasmic. The chain crosses the membrane as a helical span at residues 806–822 (VGWNIFDSLIVTLSLVE). Topologically, residues 823–831 (LFLADVEGL) are extracellular. The helical transmembrane segment at 832–848 (SVLRSFRLLRVFKLAKS) threads the bilayer. Residues 849 to 865 (WPTLNMLIKIIGNSVGA) lie on the Cytoplasmic side of the membrane. Residues 866–888 (LGNLTLVLAIIVFIFAVVGMQLF) traverse the membrane as a helical segment. At 889-915 (GKSYKECVCKINDDCTLPRWHMNDFFH) the chain is on the extracellular side. The cysteines at positions 897 and 903 are disulfide-linked. The pore-forming intramembrane region spans 916-928 (SFLIVFRVLCGEW). Over 929–940 (IETMWDCMEVAG) the chain is Extracellular. Cysteines 935 and 944 form a disulfide. A helical transmembrane segment spans residues 941–967 (QAMCLIVYMMVMVIGNLVVLNLFLALL). Residues 968-1187 (LSSFSSDNLT…WWNIRKTCYK (220 aa)) are Cytoplasmic-facing. The interval 1102–1148 (NAEELSSDSDSEYSKVRLNRSSSSECSTVDNPLPGEGEEAEAEPMNS) is disordered. A compositionally biased stretch (polar residues) spans 1120–1131 (NRSSSSECSTVD). Over residues 1137 to 1148 (EGEEAEAEPMNS) the composition is skewed to acidic residues. An III repeat occupies 1180 to 1488 (NIRKTCYKIV…KKYYNAMKKL (309 aa)). Residues 1188–1212 (IVEHSWFESFIVLMILLSSGALAFE) traverse the membrane as a helical segment. Residues 1213-1224 (DIYIERKKTIKI) lie on the Extracellular side of the membrane. Residues 1225–1250 (ILEYADKIFTYIFILEMLLKWIAYGY) form a helical membrane-spanning segment. At 1251 to 1252 (KT) the chain is on the cytoplasmic side. The chain crosses the membrane as a helical span at residues 1253 to 1278 (YFTNAWCWLDFLIVDVSLVTLVANTL). At 1279–1287 (GYSDLGPIK) the chain is on the extracellular side. A helical transmembrane segment spans residues 1288 to 1304 (SLRTLRALRPLRALSRF). Over 1305-1317 (EGMRVVVNALIGA) the chain is Cytoplasmic. The chain crosses the membrane as a helical span at residues 1318-1342 (IPSIMNVLLVCLIFWLIFSIMGVNL). Topologically, residues 1343 to 1394 (FAGKFYECINTTDGSRFPASQVPNRSECFALMNVSQNVRWKNLKVNFDNVGL) are extracellular. A disulfide bridge links Cys-1350 with Cys-1370. Asn-1352, Asn-1366, and Asn-1375 each carry an N-linked (GlcNAc...) asparagine glycan. Positions 1395 to 1405 (GYLSLLQVATF) form an intramembrane region, pore-forming. At 1406-1431 (KGWTIIMYAAVDSVNVDKQPKYEYSL) the chain is on the extracellular side. Residues 1432–1457 (YMYIYFVVFIIFGSFFTLNLFIGVII) traverse the membrane as a helical segment. Residues 1458-1514 (DNFNQQKKKLGGQDIFMTEEQKKYYNAMKKLGSKKPQKPIPRPGNKIQGCIFDLVTN) lie on the Cytoplasmic side of the membrane. A Phosphoserine; by PKC modification is found at Ser-1490. The IV repeat unit spans residues 1497–1795 (IPRPGNKIQG…WEKFDPDATQ (299 aa)). A helical membrane pass occupies residues 1515–1534 (QAFDISIMVLICLNMVTMMV). The Extracellular portion of the chain corresponds to 1535 to 1545 (EKEGQSQHMTE). The chain crosses the membrane as a helical span at residues 1546–1567 (VLYWINVVFIILFTGECVLKLI). Residues 1568–1576 (SLRHYYFTV) lie on the Cytoplasmic side of the membrane. A helical membrane pass occupies residues 1577–1598 (GWNIFDFVVVIISIVGMFLADL). At 1599–1607 (IETYFVSPT) the chain is on the extracellular side. A helical transmembrane segment spans residues 1608–1627 (LFRVIRLARIGRILRLVKGA). At 1628 to 1640 (KGIRTLLFALMMS) the chain is on the cytoplasmic side. A helical transmembrane segment spans residues 1641-1663 (LPALFNIGLLLFLVMFIYAIFGM). The Extracellular segment spans residues 1664–1686 (SNFAYVKKEDGINDMFNFETFGN). An intramembrane region (pore-forming) is located at residues 1687-1699 (SMICLFQITTSAG). Over 1700–1733 (WDGLLAPILNSKPPDCDPKKVHPGSSVEGDCGNP) the chain is Extracellular. Cys-1715 and Cys-1730 form a disulfide bridge. A helical transmembrane segment spans residues 1734-1759 (SVGIFYFVSYIIISFLVVVNMYIAVI). The Cytoplasmic segment spans residues 1760–1988 (LENFSVATEE…KGKDSKESKK (229 aa)). Positions 1889-1918 (EDVSATVIQRAYRRYRLRQNVKNISSIYIK) constitute an IQ domain. The segment at 1934-1988 (FDNVNENSSPEKTDATSSTTSPPSYDSVTKPDKEKYEQDRTEKEDKGKDSKESKK) is disordered. Over residues 1948 to 1961 (ATSSTTSPPSYDSV) the composition is skewed to low complexity. A compositionally biased stretch (basic and acidic residues) spans 1962-1988 (TKPDKEKYEQDRTEKEDKGKDSKESKK).

This sequence belongs to the sodium channel (TC 1.A.1.10) family. Nav1.7/SCN9A subfamily. The Nav1.7 voltage-gated sodium channel consists of an ion-conducting alpha subunit SCN9A which is functional on its own regulated by one or more beta-1 (SCN1B), beta-2 (SCN2B), beta-3 (SCN3B) and beta-4 (SCN4B) subunits. SCN1B and SCN3B are non-covalently associated with SCN9A. SCN2B and SCN4B are disulfide-linked to SCN9A. SCN1B regulates channel inactivation. Interacts with NEDD4 and NEDD4L; regulates Nav1.7 activity most probably through ubiquitination and subsequent endocytosis. Interacts with TMEM233; modulates the gating properties of NaV1.7. Phosphorylation at Ser-1490 by PKC in a highly conserved cytoplasmic loop increases peak sodium currents. Post-translationally, ubiquitinated by NEDD4L; which may promote its endocytosis. As to expression, expressed strongly in dorsal root ganglion, with only minor levels elsewhere in the body, smooth muscle cells, MTC cell line and C-cell carcinoma. Also expressed in vagus nerves within the head and neck region. Isoform 1 is expressed preferentially in the central and peripheral nervous system. Isoform 2 is expressed preferentially in the dorsal root ganglion.

It is found in the cell membrane. Its subcellular location is the cell projection. The protein localises to the neuron projection. The protein resides in the axon. The catalysed reaction is Na(+)(in) = Na(+)(out). Its activity is regulated as follows. Inhibited by tetrodotoxin. Weakly inhibited by saxitoxin. Inhibited by the spider huwentoxin-IV that binds the extracellular loop S3-S4 of repeat II. Inhibited by the spider protoxin-II that binds the extracellular loop S3-S4 of repeats II and IV. Inhibited by the scorpion alpha-toxins CvIV4 and AaH2. Inhibited by the conotoxin GVIIJ. Inhibited by the spider beta/delta-theraphotoxin-Pre1a. Its function is as follows. Pore-forming subunit of Nav1.7, a voltage-gated sodium (Nav) channel that directly mediates the depolarizing phase of action potentials in excitable membranes. Navs, also called VGSCs (voltage-gated sodium channels) or VDSCs (voltage-dependent sodium channels), operate by switching between closed and open conformations depending on the voltage difference across the membrane. In the open conformation they allow Na(+) ions to selectively pass through the pore, along their electrochemical gradient. The influx of Na(+) ions provokes membrane depolarization, initiating the propagation of electrical signals throughout cells and tissues. Nav1.7 plays a crucial role in controlling the excitability and action potential propagation from nociceptor neurons, thereby contributing to the sensory perception of pain. This Homo sapiens (Human) protein is Sodium channel protein type 9 subunit alpha.